We begin with the raw amino-acid sequence, 311 residues long: MPETCPNTVTKMRCAVVTGGNKGIGFEICKQLSSSGIMVVLTCRDVTRGLEAVEKLKNSNHENVVFHQLDVTDPITTMSSLADFIKARFGKLDILVNNAGVAGFSVDADRFKAMISDIGEDSEEVVKIYEKPEAQELMSETYELAEECLKINYYGVKSVTEVLLPLLQLSDSPRIVNVSSSTGSLKYVSNETALEILGDGDALTEERIDMVVNMLLKDFKENLIETNGWPSFGAAYTTSKACLNAYTRVLAKKIPKFQVNCVCPGLVKTEMNYGIGNYTADEGAKHVVRIALFPDDGPSGFFYDCSELSAF.

Residue 17–40 coordinates NADP(+); that stretch reads VTGGNKGIGFEICKQLSSSGIMVV. Ser180 serves as a coordination point for substrate. Tyr236 (proton acceptor) is an active-site residue.

The protein belongs to the short-chain dehydrogenases/reductases (SDR) family.

The catalysed reaction is (7S)-salutaridinol + NADP(+) = salutaridine + NADPH + H(+). Subject to substrate inhibition at salutaridine concentrations higher than 20 to 30 uM. Functionally, involved in biosynthesis of morphinan-type benzylisoquinoline alkaloids. Catalyzes the stereospecific conversion of salutaridine to salutaridinol. In Papaver bracteatum (Great scarlet poppy), this protein is Salutaridine reductase.